The chain runs to 406 residues: Elongation factor Tu (406 aa).

A tr-type G domain is found at 10–215 (KPHVNVGTIG…AIDEYIPTPV (206 aa)). Residues 19 to 26 (GHVDHGKT) are G1. 19–26 (GHVDHGKT) contacts GTP. Thr26 is a Mg(2+) binding site. Positions 61 to 65 (GITIN) are G2. The G3 stretch occupies residues 82-85 (DCPG). Residues 82–86 (DCPGH) and 137–140 (NKVD) contribute to the GTP site. Residues 137 to 140 (NKVD) form a G4 region. The interval 175-177 (SAL) is G5.

This sequence belongs to the TRAFAC class translation factor GTPase superfamily. Classic translation factor GTPase family. EF-Tu/EF-1A subfamily. Monomer.

It localises to the cytoplasm. The enzyme catalyses GTP + H2O = GDP + phosphate + H(+). In terms of biological role, GTP hydrolase that promotes the GTP-dependent binding of aminoacyl-tRNA to the A-site of ribosomes during protein biosynthesis. The polypeptide is Elongation factor Tu (Thermus aquaticus).